Reading from the N-terminus, the 544-residue chain is Ceramide glucosyltransferase (544 aa).

The Lumenal segment spans residues 1 to 15 (MVQEELSLFRITTGY). A helical membrane pass occupies residues 16 to 36 (FFLLWYIIILVAAYSGFFEIL). Over 37-427 (FNFRNRPILH…LATLIEPTTE (391 aa)) the chain is Cytoplasmic. Residue aspartate 109 is a short sequence motif, D1. A short sequence motif (D2) is located at residue aspartate 171. Aspartate 364 is a short sequence motif (D3). Aspartate 364 serves as the catalytic Proton acceptor. Residues 404 to 408 (RRVRW) carry the (Q/R)XXRW motif. The chain crosses the membrane as a helical span at residues 428–448 (SIICGIYGTYAISTVFFGTWF). Over 449 to 451 (NKY) the chain is Lumenal. A helical transmembrane segment spans residues 452-472 (WFVMHMLIWMLTDYVQYHTLI). Residues 473-501 (NHTLDVKNITYLPNWLNESIPPKQRNCLQ) are Cytoplasmic-facing. Residues 502 to 522 (WGYIWILRELLALPIWIIAMI) form a helical membrane-spanning segment. Topologically, residues 523-544 (GHEIDWRGRPFRIKKDLTAEEM) are lumenal.

Belongs to the glycosyltransferase 2 family.

Its subcellular location is the golgi apparatus membrane. The enzyme catalyses an N-acylsphing-4-enine + UDP-alpha-D-glucose = a beta-D-glucosyl-(1&lt;-&gt;1')-N-acylsphing-4-enine + UDP + H(+). Its pathway is lipid metabolism; sphingolipid metabolism. In terms of biological role, catalyzes the final step in the biosynthesis of the membrane lipid glucosylceramide (GluCer), the transfer of glucose to ceramide. Glucosylceramides play important roles in growth, differentiation and pathogenicity. The chain is Ceramide glucosyltransferase from Candida albicans (strain SC5314 / ATCC MYA-2876) (Yeast).